The following is a 553-amino-acid chain: Arginine--tRNA ligase (553 aa).

Positions 123–133 (ANPTGPLTIGR) match the 'HIGH' region motif.

This sequence belongs to the class-I aminoacyl-tRNA synthetase family. Monomer.

It localises to the cytoplasm. It catalyses the reaction tRNA(Arg) + L-arginine + ATP = L-arginyl-tRNA(Arg) + AMP + diphosphate. The polypeptide is Arginine--tRNA ligase (Chlorobium phaeobacteroides (strain BS1)).